A 38-amino-acid chain; its full sequence is Cytochrome b6-f complex subunit 5 (38 aa).

A helical membrane pass occupies residues 5–25 (LVLGIVLGLIPITLAGLFVAA).

The protein belongs to the PetG family. The 4 large subunits of the cytochrome b6-f complex are cytochrome b6, subunit IV (17 kDa polypeptide, PetD), cytochrome f and the Rieske protein, while the 4 small subunits are PetG, PetL, PetM and PetN. The complex functions as a dimer.

It localises to the cellular thylakoid membrane. In terms of biological role, component of the cytochrome b6-f complex, which mediates electron transfer between photosystem II (PSII) and photosystem I (PSI), cyclic electron flow around PSI, and state transitions. PetG is required for either the stability or assembly of the cytochrome b6-f complex. This is Cytochrome b6-f complex subunit 5 from Microcystis aeruginosa (strain NIES-843 / IAM M-2473).